The chain runs to 386 residues: Succinate--CoA ligase [ADP-forming] subunit beta (386 aa).

The ATP-grasp domain maps to 9-244 (KDLLTSYAIP…PSQENVRDVL (236 aa)). Residues lysine 46, 53–55 (GRG), valine 102, and glutamate 107 contribute to the ATP site. Residues asparagine 199 and aspartate 213 each contribute to the Mg(2+) site. Substrate contacts are provided by residues asparagine 264 and 321 to 323 (GIM).

It belongs to the succinate/malate CoA ligase beta subunit family. In terms of assembly, heterotetramer of two alpha and two beta subunits. Mg(2+) serves as cofactor.

It catalyses the reaction succinate + ATP + CoA = succinyl-CoA + ADP + phosphate. It carries out the reaction GTP + succinate + CoA = succinyl-CoA + GDP + phosphate. The protein operates within carbohydrate metabolism; tricarboxylic acid cycle; succinate from succinyl-CoA (ligase route): step 1/1. Functionally, succinyl-CoA synthetase functions in the citric acid cycle (TCA), coupling the hydrolysis of succinyl-CoA to the synthesis of either ATP or GTP and thus represents the only step of substrate-level phosphorylation in the TCA. The beta subunit provides nucleotide specificity of the enzyme and binds the substrate succinate, while the binding sites for coenzyme A and phosphate are found in the alpha subunit. This Chlamydia abortus (strain DSM 27085 / S26/3) (Chlamydophila abortus) protein is Succinate--CoA ligase [ADP-forming] subunit beta.